A 554-amino-acid polypeptide reads, in one-letter code: Glucose-6-phosphate isomerase (554 aa).

Glu358 (proton donor) is an active-site residue. Active-site residues include His389 and Lys515. Positions 527–540 (ANNSPAPQSDSSTD) are enriched in polar residues. The interval 527–554 (ANNSPAPQSDSSTDALVRRYRSERGRTS) is disordered. The segment covering 542–554 (LVRRYRSERGRTS) has biased composition (basic and acidic residues).

This sequence belongs to the GPI family.

The protein localises to the cytoplasm. It catalyses the reaction alpha-D-glucose 6-phosphate = beta-D-fructose 6-phosphate. It functions in the pathway carbohydrate biosynthesis; gluconeogenesis. Its pathway is carbohydrate degradation; glycolysis; D-glyceraldehyde 3-phosphate and glycerone phosphate from D-glucose: step 2/4. Functionally, catalyzes the reversible isomerization of glucose-6-phosphate to fructose-6-phosphate. The polypeptide is Glucose-6-phosphate isomerase (Mycolicibacterium paratuberculosis (strain ATCC BAA-968 / K-10) (Mycobacterium paratuberculosis)).